Here is a 1040-residue protein sequence, read N- to C-terminus: Myoblast growth factor receptor egl-15 (1040 aa).

An N-terminal signal peptide occupies residues 1-19; sequence MSYFLASCLGVGLLSTVSC. The Extracellular portion of the chain corresponds to 20–525; it reads SLQGLTSHYR…PKIDRWTTSD (506 aa). Residues 33 to 125 form the Ig-like C2-type 1 domain; it reads PRFKHVANER…GQISRNFTVE (93 aa). Cys55 and Cys109 form a disulfide bridge. Residue Asn121 is glycosylated (N-linked (GlcNAc...) asparagine). Basic and acidic residues predominate over residues 234–257; the sequence is VHDSEESPSESRTEFINADEKENK. The segment at 234-267 is disordered; that stretch reads VHDSEESPSESRTEFINADEKENKEDEEEDYSVS. Residues Asn280 and Asn299 are each glycosylated (N-linked (GlcNAc...) asparagine). Ig-like C2-type domains lie at 287 to 383 and 391 to 501; these read PYFK…FHVI and PPII…ATLT. An intrachain disulfide couples Cys314 to Cys367. Asn401, Asn407, Asn433, Asn440, Asn449, Asn474, and Asn497 each carry an N-linked (GlcNAc...) asparagine glycan. A disulfide bridge connects residues Cys414 and Cys485. The helical transmembrane segment at 526 to 549 threads the bilayer; sequence YIFTTILLFLLLAATLFGILFMVC. The Cytoplasmic portion of the chain corresponds to 550–1040; the sequence is KQTLHKKGFM…NNNSMSKPEF (491 aa). The Protein kinase domain occupies 640-931; that stretch reads LSLVHMLGEG…KTIVDYLDWM (292 aa). Residues 646–654 and Lys672 contribute to the ATP site; that span reads LGEGAFGEV. The active-site Proton acceptor is the Asp797. The residue at position 828 (Tyr828) is a Phosphotyrosine; by autocatalysis. Disordered stretches follow at residues 952–984 and 1021–1040; these read ERST…LPSE and TPET…KPEF. The span at 1022–1040 shows a compositional bias: polar residues; it reads PETSQRIPSNNNSMSKPEF.

Belongs to the protein kinase superfamily. Tyr protein kinase family. Fibroblast growth factor receptor subfamily. Mg(2+) is required as a cofactor. Post-translationally, activity is regulated by the phosphatase clr-1, however it is not known whether clr-1 acts directly on egl-15.

It is found in the membrane. It carries out the reaction L-tyrosyl-[protein] + ATP = O-phospho-L-tyrosyl-[protein] + ADP + H(+). Receptor tyrosine kinase required for larval development. May phosphorylate adapter protein soc-1 which in turn may result in the recruitment and/or activation of phosphatase ptp-2. May activate the Ras/MAPK kinase signaling pathway which includes sem-5, sos-1, let-60/Ras, lin-45/Raf, mek-2 and mpk-1. Acts in the hypodermis to regulate axon growth and fluid homeostasis. Activates protein degradation in muscles. Probably following interaction with ligand let-756, negatively regulates membrane protrusion from body wall muscles during larval development. Plays a role in nicotinic acetylcholine receptor (nAChR)-mediated sensitivity to nicotine. Regulates synaptic levels of nAChR subunit lev-1 in the nerve cord. In terms of biological role, affects the maintenance of axon position without affecting axon growth. Interaction with egl-17 is required for the guidance of sex myoblast migration during gonad development. Its function is as follows. Interaction with let-756 appears to play a role in maintaining body morphology at higher temperatures. This is Myoblast growth factor receptor egl-15 (egl-15) from Caenorhabditis elegans.